The sequence spans 572 residues: Mitochondrial chaperone TCM62 (572 aa).

The transit peptide at 1 to 16 (MLRNCLRKLGNHQTKC) directs the protein to the mitochondrion. The Mitochondrial matrix segment spans residues 17–471 (SVKTLHTPIY…KANEPNFMTK (455 aa)). A helical transmembrane segment spans residues 472 to 488 (VGINAVLSAVILPSEVA). Residues 489-572 (FKNAYGYNYY…VYKKPERHKA (84 aa)) are Mitochondrial intermembrane-facing.

The protein belongs to the chaperonin (HSP60) family. In terms of assembly, forms a high molecular mass protein complex of approximately 850 kDa.

Its subcellular location is the mitochondrion inner membrane. Its function is as follows. Chaperone. Required for the assembly of succinate dehydrogenase subunits. Ensures mitochondrial gene expression at elevated temperatures and prevents heat-aggregation of the ribosomal subunit VAR1. This Saccharomyces cerevisiae (strain YJM789) (Baker's yeast) protein is Mitochondrial chaperone TCM62 (TCM62).